A 222-amino-acid chain; its full sequence is 3-demethoxyubiquinol 3-hydroxylase (222 aa).

Fe cation contacts are provided by glutamate 71, glutamate 101, histidine 104, glutamate 153, glutamate 185, and histidine 188.

This sequence belongs to the COQ7 family. Fe cation serves as cofactor.

Its subcellular location is the cell membrane. The enzyme catalyses a 5-methoxy-2-methyl-3-(all-trans-polyprenyl)benzene-1,4-diol + AH2 + O2 = a 3-demethylubiquinol + A + H2O. The protein operates within cofactor biosynthesis; ubiquinone biosynthesis. Catalyzes the hydroxylation of 2-nonaprenyl-3-methyl-6-methoxy-1,4-benzoquinol during ubiquinone biosynthesis. In Bordetella pertussis (strain Tohama I / ATCC BAA-589 / NCTC 13251), this protein is 3-demethoxyubiquinol 3-hydroxylase.